Consider the following 62-residue polypeptide: uncharacterized protein (62 aa).

Residues 1–26 (MGELAASANHGHSPCYPERKGTPGDL) are disordered. Basic and acidic residues predominate over residues 17–26 (PERKGTPGDL).

This is an uncharacterized protein from Homo sapiens (Human).